We begin with the raw amino-acid sequence, 206 residues long: Large ribosomal subunit protein uL4 (206 aa).

The segment at K49 to R73 is disordered.

It belongs to the universal ribosomal protein uL4 family. As to quaternary structure, part of the 50S ribosomal subunit.

Functionally, one of the primary rRNA binding proteins, this protein initially binds near the 5'-end of the 23S rRNA. It is important during the early stages of 50S assembly. It makes multiple contacts with different domains of the 23S rRNA in the assembled 50S subunit and ribosome. In terms of biological role, forms part of the polypeptide exit tunnel. The chain is Large ribosomal subunit protein uL4 from Paramagnetospirillum magneticum (strain ATCC 700264 / AMB-1) (Magnetospirillum magneticum).